A 135-amino-acid chain; its full sequence is Succinate dehydrogenase assembly factor 3, mitochondrial (135 aa).

Residues 1 to 12 (MRIFTRLLYAAP) constitute a mitochondrion transit peptide.

The protein belongs to the complex I LYR family. SDHAF3 subfamily. As to quaternary structure, interacts with the iron-sulfur protein subunit within the SDH catalytic dimer.

The protein resides in the mitochondrion matrix. Functionally, plays an essential role in the assembly of succinate dehydrogenase (SDH), an enzyme complex (also referred to as respiratory complex II) that is a component of both the tricarboxylic acid (TCA) cycle and the mitochondrial electron transport chain, and which couples the oxidation of succinate to fumarate with the reduction of ubiquinone (coenzyme Q) to ubiquinol. Promotes maturation of the iron-sulfur protein subunit of the SDH catalytic dimer, protecting it from the deleterious effects of oxidants. May act together with SDHAF1. This is Succinate dehydrogenase assembly factor 3, mitochondrial from Emericella nidulans (strain FGSC A4 / ATCC 38163 / CBS 112.46 / NRRL 194 / M139) (Aspergillus nidulans).